Consider the following 67-residue polypeptide: MSLLPVMVIFGLSFPPVFFELLVPLALFFLLRRLLQPTGIYDFVWHPALFNTALYCCLFYLISCLFV.

2 consecutive transmembrane segments (helical) span residues 9–29 and 47–67; these read IFGLSFPPVFFELLVPLALFF and PALFNTALYCCLFYLISCLFV.

Belongs to the AaeX family.

The protein resides in the cell membrane. The chain is Protein AaeX from Serratia marcescens.